The chain runs to 136 residues: Small ribosomal subunit protein uS9 (136 aa).

It belongs to the universal ribosomal protein uS9 family.

The polypeptide is Small ribosomal subunit protein uS9 (Borrelia hermsii (strain HS1 / DAH)).